A 171-amino-acid polypeptide reads, in one-letter code: ATP synthase subunit b 2 (171 aa).

A helical membrane pass occupies residues 9-29; it reads APWHHPVFWVAVAFVLFFVLF.

It belongs to the ATPase B chain family. As to quaternary structure, F-type ATPases have 2 components, F(1) - the catalytic core - and F(0) - the membrane proton channel. F(1) has five subunits: alpha(3), beta(3), gamma(1), delta(1), epsilon(1). F(0) has three main subunits: a(1), b(2) and c(10-14). The alpha and beta chains form an alternating ring which encloses part of the gamma chain. F(1) is attached to F(0) by a central stalk formed by the gamma and epsilon chains, while a peripheral stalk is formed by the delta and b chains.

The protein localises to the cell inner membrane. Its function is as follows. F(1)F(0) ATP synthase produces ATP from ADP in the presence of a proton or sodium gradient. F-type ATPases consist of two structural domains, F(1) containing the extramembraneous catalytic core and F(0) containing the membrane proton channel, linked together by a central stalk and a peripheral stalk. During catalysis, ATP synthesis in the catalytic domain of F(1) is coupled via a rotary mechanism of the central stalk subunits to proton translocation. In terms of biological role, component of the F(0) channel, it forms part of the peripheral stalk, linking F(1) to F(0). The polypeptide is ATP synthase subunit b 2 (Granulibacter bethesdensis (strain ATCC BAA-1260 / CGDNIH1)).